We begin with the raw amino-acid sequence, 179 residues long: Large ribosomal subunit protein uL6 (179 aa).

The protein belongs to the universal ribosomal protein uL6 family. As to quaternary structure, part of the 50S ribosomal subunit.

In terms of biological role, this protein binds to the 23S rRNA, and is important in its secondary structure. It is located near the subunit interface in the base of the L7/L12 stalk, and near the tRNA binding site of the peptidyltransferase center. The chain is Large ribosomal subunit protein uL6 from Halothermothrix orenii (strain H 168 / OCM 544 / DSM 9562).